An 81-amino-acid polypeptide reads, in one-letter code: Cytochrome b559 subunit alpha (81 aa).

A helical membrane pass occupies residues 21-35; that stretch reads VIHALTIPALFLAGW. Residue H23 coordinates heme.

Belongs to the PsbE/PsbF family. Heterodimer of an alpha subunit and a beta subunit. PSII is composed of 1 copy each of membrane proteins PsbA, PsbB, PsbC, PsbD, PsbE, PsbF, PsbH, PsbI, PsbJ, PsbK, PsbL, PsbM, PsbT, PsbX, PsbY, PsbZ, Psb30/Ycf12, peripheral proteins PsbO, CyanoQ (PsbQ), PsbU, PsbV and a large number of cofactors. It forms dimeric complexes. The cofactor is heme b.

Its subcellular location is the cellular thylakoid membrane. Its function is as follows. This b-type cytochrome is tightly associated with the reaction center of photosystem II (PSII). PSII is a light-driven water:plastoquinone oxidoreductase that uses light energy to abstract electrons from H(2)O, generating O(2) and a proton gradient subsequently used for ATP formation. It consists of a core antenna complex that captures photons, and an electron transfer chain that converts photonic excitation into a charge separation. This chain is Cytochrome b559 subunit alpha, found in Synechococcus sp. (strain JA-3-3Ab) (Cyanobacteria bacterium Yellowstone A-Prime).